A 136-amino-acid polypeptide reads, in one-letter code: ATP synthase epsilon chain (136 aa).

It belongs to the ATPase epsilon chain family. In terms of assembly, F-type ATPases have 2 components, CF(1) - the catalytic core - and CF(0) - the membrane proton channel. CF(1) has five subunits: alpha(3), beta(3), gamma(1), delta(1), epsilon(1). CF(0) has three main subunits: a, b and c.

It is found in the cellular thylakoid membrane. In terms of biological role, produces ATP from ADP in the presence of a proton gradient across the membrane. This chain is ATP synthase epsilon chain (atpC), found in Prochloron didemni.